Here is a 363-residue protein sequence, read N- to C-terminus: 3-isopropylmalate dehydrogenase (363 aa).

An NAD(+)-binding site is contributed by 78 to 91 (GPKWEHLPPDQQPE). Residues arginine 99, arginine 109, arginine 138, and aspartate 227 each coordinate substrate. 3 residues coordinate Mg(2+): aspartate 227, aspartate 251, and aspartate 255. 285-297 (GSAPDIAGKNIAN) serves as a coordination point for NAD(+).

The protein belongs to the isocitrate and isopropylmalate dehydrogenases family. LeuB type 1 subfamily. In terms of assembly, homodimer. The cofactor is Mg(2+). It depends on Mn(2+) as a cofactor.

The protein resides in the cytoplasm. The catalysed reaction is (2R,3S)-3-isopropylmalate + NAD(+) = 4-methyl-2-oxopentanoate + CO2 + NADH. It functions in the pathway amino-acid biosynthesis; L-leucine biosynthesis; L-leucine from 3-methyl-2-oxobutanoate: step 3/4. Catalyzes the oxidation of 3-carboxy-2-hydroxy-4-methylpentanoate (3-isopropylmalate) to 3-carboxy-4-methyl-2-oxopentanoate. The product decarboxylates to 4-methyl-2 oxopentanoate. In Shigella flexneri, this protein is 3-isopropylmalate dehydrogenase.